Reading from the N-terminus, the 167-residue chain is Ubiquitin-fold modifier-conjugating enzyme 1 (167 aa).

The active-site Glycyl thioester intermediate is Cys-116.

The protein belongs to the ubiquitin-conjugating enzyme family. UFC1 subfamily. Interacts with UBA5 (via C-terminus). Interacts with UFL1. Interacts with UFM1.

Its function is as follows. E2-like enzyme which specifically catalyzes the second step in ufmylation. Accepts the ubiquitin-like modifier UFM1 from the E1 enzyme UBA5 and forms an intermediate with UFM1 via a thioester linkage. Ufmylation is involved in various processes, such as ribosome recycling, response to DNA damage, interferon response or reticulophagy (also called ER-phagy). The polypeptide is Ubiquitin-fold modifier-conjugating enzyme 1 (Osmerus mordax (Rainbow smelt)).